We begin with the raw amino-acid sequence, 158 residues long: MVEKVPMTPGGFVKLQEELRWRQQEERPRIIEAIAEARAHGDLSENAEYHAAKEAQSHNEGRISELEDLTARAEVIDLTKMSGDKIKFGAKVKLIDEDTEEEKTYQIVGDQEADVKAGRISISSPIARALIGKEVGDSIEVNAPGGSKAYEILQVSWG.

Belongs to the GreA/GreB family.

Necessary for efficient RNA polymerase transcription elongation past template-encoded arresting sites. The arresting sites in DNA have the property of trapping a certain fraction of elongating RNA polymerases that pass through, resulting in locked ternary complexes. Cleavage of the nascent transcript by cleavage factors such as GreA or GreB allows the resumption of elongation from the new 3'terminus. GreA releases sequences of 2 to 3 nucleotides. The sequence is that of Transcription elongation factor GreA from Rhizobium johnstonii (strain DSM 114642 / LMG 32736 / 3841) (Rhizobium leguminosarum bv. viciae).